A 487-amino-acid chain; its full sequence is Glutamyl-tRNA(Gln) amidotransferase subunit A (487 aa).

Active-site charge relay system residues include K78 and S153. S177 functions as the Acyl-ester intermediate in the catalytic mechanism.

Belongs to the amidase family. GatA subfamily. Heterotrimer of A, B and C subunits.

The enzyme catalyses L-glutamyl-tRNA(Gln) + L-glutamine + ATP + H2O = L-glutaminyl-tRNA(Gln) + L-glutamate + ADP + phosphate + H(+). In terms of biological role, allows the formation of correctly charged Gln-tRNA(Gln) through the transamidation of misacylated Glu-tRNA(Gln) in organisms which lack glutaminyl-tRNA synthetase. The reaction takes place in the presence of glutamine and ATP through an activated gamma-phospho-Glu-tRNA(Gln). This is Glutamyl-tRNA(Gln) amidotransferase subunit A from Oleidesulfovibrio alaskensis (strain ATCC BAA-1058 / DSM 17464 / G20) (Desulfovibrio alaskensis).